The chain runs to 692 residues: Elongation factor G 2 (692 aa).

Residues 8 to 283 (KDVRNIGIMA…GVVNYLPSPL (276 aa)) enclose the tr-type G domain. Residues 17–24 (AHIDAGKT), 81–85 (DTPGH), and 135–138 (NKMD) contribute to the GTP site.

This sequence belongs to the TRAFAC class translation factor GTPase superfamily. Classic translation factor GTPase family. EF-G/EF-2 subfamily.

The protein resides in the cytoplasm. Functionally, catalyzes the GTP-dependent ribosomal translocation step during translation elongation. During this step, the ribosome changes from the pre-translocational (PRE) to the post-translocational (POST) state as the newly formed A-site-bound peptidyl-tRNA and P-site-bound deacylated tRNA move to the P and E sites, respectively. Catalyzes the coordinated movement of the two tRNA molecules, the mRNA and conformational changes in the ribosome. The chain is Elongation factor G 2 from Desulfotalea psychrophila (strain LSv54 / DSM 12343).